Reading from the N-terminus, the 343-residue chain is WAT1-related protein At1g43650 (343 aa).

The next 10 membrane-spanning stretches (helical) occupy residues Met-9–Ile-29, Phe-36–Phe-56, Leu-65–Leu-85, Thr-98–Phe-118, Gly-130–Val-150, Ser-175–Met-195, Leu-209–Asn-229, Phe-239–Trp-259, Phe-272–Phe-292, and Phe-296–Trp-316. EamA domains follow at residues Ile-16–Val-139 and Cys-188–Leu-313.

It belongs to the drug/metabolite transporter (DMT) superfamily. Plant drug/metabolite exporter (P-DME) (TC 2.A.7.4) family.

Its subcellular location is the membrane. This chain is WAT1-related protein At1g43650, found in Arabidopsis thaliana (Mouse-ear cress).